A 172-amino-acid chain; its full sequence is Zinc finger protein 580 (172 aa).

Residues M1 to Y92 form a disordered region. A compositionally biased stretch (pro residues) spans M19 to P30. K31 is covalently cross-linked (Glycyl lysine isopeptide (Lys-Gly) (interchain with G-Cter in SUMO2)). The C2H2-type 1 zinc-finger motif lies at Y92–H114. A Glycyl lysine isopeptide (Lys-Gly) (interchain with G-Cter in SUMO2) cross-link involves residue K118. 2 consecutive C2H2-type zinc fingers follow at residues F120 to H142 and H150 to H172.

In terms of assembly, interacts with SMAD2.

The protein resides in the nucleus. In terms of biological role, involved in the regulation of endothelial cell proliferation and migration. Mediates H(2)O(2)-induced leukocyte chemotaxis by elevating interleukin-8 production and may play a role in inflammation. May be involved in transcriptional regulation. The chain is Zinc finger protein 580 (Znf580) from Mus musculus (Mouse).